We begin with the raw amino-acid sequence, 290 residues long: MTSTKEIKNKIVSVTNTKKITKAMEMVAVSKMRKTEERMRSGRPYSDIIRKVIDHVTQGNLEYKHSYLEERKTNRIGMIIISTDRGLCGGLNTNLFKQVLFKIQNFAKVNIPCDLILFGLKSLSVFKLCGSNILAKATNLGENPKLEELINSVGIILQEYQYKRIDKIFIAYNKFHNKMSQYPTITQLLPFSKKNDQDASNNNWDYLYEPESKLILDTLFNRYIESQVYQSILENIASEHAARMIAMKTATDNSGNRIKELQLVYNKVRQANITQELNEIVSGASAVSID.

The protein belongs to the ATPase gamma chain family. F-type ATPases have 2 components, CF(1) - the catalytic core - and CF(0) - the membrane proton channel. CF(1) has five subunits: alpha(3), beta(3), gamma(1), delta(1), epsilon(1). CF(0) has three main subunits: a, b and c.

It localises to the cell membrane. Functionally, produces ATP from ADP in the presence of a proton gradient across the membrane. The gamma chain is believed to be important in regulating ATPase activity and the flow of protons through the CF(0) complex. This is ATP synthase gamma chain from Buchnera aphidicola subsp. Acyrthosiphon pisum (strain 5A).